Here is a 190-residue protein sequence, read N- to C-terminus: Inosine triphosphate pyrophosphatase (190 aa).

Residue 8–13 coordinates ITP; the sequence is TGNANK. Glu37 is a binding site for Mg(2+). ITP is bound by residues Lys49, 65-66, Lys82, 140-143, Lys163, and 168-169; these read DT, FGWD, and HR.

This sequence belongs to the HAM1 NTPase family. As to quaternary structure, homodimer. Mg(2+) is required as a cofactor. Requires Mn(2+) as cofactor.

It is found in the cytoplasm. It localises to the nucleus. The catalysed reaction is ITP + H2O = IMP + diphosphate + H(+). It carries out the reaction dITP + H2O = dIMP + diphosphate + H(+). It catalyses the reaction XTP + H2O = XMP + diphosphate + H(+). Pyrophosphatase that hydrolyzes non-canonical purine nucleotides such as inosine triphosphate (ITP), deoxyinosine triphosphate (dITP) or xanthosine 5'-triphosphate (XTP) to their respective monophosphate derivatives. The enzyme does not distinguish between the deoxy- and ribose forms. Probably excludes non-canonical purines from RNA and DNA precursor pools, thus preventing their incorporation into RNA and DNA and avoiding chromosomal lesions. The protein is Inosine triphosphate pyrophosphatase of Batrachochytrium dendrobatidis (strain JAM81 / FGSC 10211) (Frog chytrid fungus).